The chain runs to 309 residues: Homoserine O-succinyltransferase (309 aa).

The active-site Acyl-thioester intermediate is the Cys-142. Lys-163 and Ser-192 together coordinate substrate. His-235 serves as the catalytic Proton acceptor. Glu-237 is an active-site residue. A substrate-binding site is contributed by Arg-249.

Belongs to the MetA family.

Its subcellular location is the cytoplasm. The catalysed reaction is L-homoserine + succinyl-CoA = O-succinyl-L-homoserine + CoA. Its pathway is amino-acid biosynthesis; L-methionine biosynthesis via de novo pathway; O-succinyl-L-homoserine from L-homoserine: step 1/1. Transfers a succinyl group from succinyl-CoA to L-homoserine, forming succinyl-L-homoserine. The chain is Homoserine O-succinyltransferase from Enterobacter sp. (strain 638).